We begin with the raw amino-acid sequence, 505 residues long: Deoxyguanosinetriphosphate triphosphohydrolase (505 aa).

The 208-residue stretch at 66-273 folds into the HD domain; the sequence is RLTHSMEVQQ…MEAADDISYC (208 aa).

The protein belongs to the dGTPase family. Type 1 subfamily. Homotetramer. Mg(2+) serves as cofactor.

The catalysed reaction is dGTP + H2O = 2'-deoxyguanosine + triphosphate + H(+). Its activity is regulated as follows. Inhibited by the action of reducing agents such as dithiothreitol and 2-mercaptoethanol. In terms of biological role, dGTPase preferentially hydrolyzes dGTP over the other canonical NTPs. This chain is Deoxyguanosinetriphosphate triphosphohydrolase, found in Shigella boydii.